Reading from the N-terminus, the 332-residue chain is NH(3)-dependent NAD(+) synthetase (332 aa).

Position 48–55 (Gly-48–Ser-55) interacts with ATP. Asp-54 is a Mg(2+) binding site. Arg-184 contributes to the deamido-NAD(+) binding site. Residue Thr-204 coordinates ATP. Glu-209 provides a ligand contact to Mg(2+). Lys-217 and Asp-224 together coordinate deamido-NAD(+). Lys-233 and Thr-255 together coordinate ATP.

This sequence belongs to the NAD synthetase family. As to quaternary structure, homodimer.

It catalyses the reaction deamido-NAD(+) + NH4(+) + ATP = AMP + diphosphate + NAD(+) + H(+). It participates in cofactor biosynthesis; NAD(+) biosynthesis; NAD(+) from deamido-NAD(+) (ammonia route): step 1/1. In terms of biological role, catalyzes the ATP-dependent amidation of deamido-NAD to form NAD. Uses ammonia as a nitrogen source. The polypeptide is NH(3)-dependent NAD(+) synthetase (Rhizobium rhizogenes (strain K84 / ATCC BAA-868) (Agrobacterium radiobacter)).